The following is a 386-amino-acid chain: MSALPPTALALAEQLIARASVTPEDAGCQALVVQRLQAQGFDCHTLESGPDDFRVTNLWAVRRGRSADGFTLVFAGHTDVVPTGPLERWTSDPFVPSHRDGRLYGRGAADMKTSIACMVVAIEEFVAAYPRHAGSIALLLTSDEEGPALDGTTQVVRWLQARGERLDGCIVGEPTSVNAVGDMIKNGRRGSLSGRLVVQGVQGHIAYPHLAKNPIHAVAPALAELVQVVWDGGNEHFPPTSWQVSNLHAGTGASNVIPGEAVVDFNFRFSTESTPETLQQRLAAVLDRHGLQYTIDWTLGGRPFLTRPGSLTEALGSAILQVTGRTTELSTTGGTSDGRFIATVCPQVVECGPVNASIHQIDEHVAVAEIEPLKEIYRSTLERLVA.

His77 contributes to the Zn(2+) binding site. Residue Asp79 is part of the active site. Asp110 is a binding site for Zn(2+). The active-site Proton acceptor is Glu144. Zn(2+)-binding residues include Glu145, Glu173, and His359.

It belongs to the peptidase M20A family. DapE subfamily. In terms of assembly, homodimer. Zn(2+) is required as a cofactor. It depends on Co(2+) as a cofactor.

The enzyme catalyses N-succinyl-(2S,6S)-2,6-diaminopimelate + H2O = (2S,6S)-2,6-diaminopimelate + succinate. The protein operates within amino-acid biosynthesis; L-lysine biosynthesis via DAP pathway; LL-2,6-diaminopimelate from (S)-tetrahydrodipicolinate (succinylase route): step 3/3. Its function is as follows. Catalyzes the hydrolysis of N-succinyl-L,L-diaminopimelic acid (SDAP), forming succinate and LL-2,6-diaminopimelate (DAP), an intermediate involved in the bacterial biosynthesis of lysine and meso-diaminopimelic acid, an essential component of bacterial cell walls. The sequence is that of Succinyl-diaminopimelate desuccinylase from Methylibium petroleiphilum (strain ATCC BAA-1232 / LMG 22953 / PM1).